Here is a 158-residue protein sequence, read N- to C-terminus: Large ribosomal subunit protein uL15 (158 aa).

The protein belongs to the universal ribosomal protein uL15 family. In terms of assembly, part of the 50S ribosomal subunit.

Functionally, binds to the 23S rRNA. This Aeropyrum pernix (strain ATCC 700893 / DSM 11879 / JCM 9820 / NBRC 100138 / K1) protein is Large ribosomal subunit protein uL15.